The sequence spans 372 residues: GTP cyclohydrolase 1 type 2 homolog (372 aa).

5 residues coordinate a divalent metal cation: His-67, His-68, Asp-106, His-332, and Glu-335.

This sequence belongs to the GTP cyclohydrolase I type 2/NIF3 family. Homohexamer.

The chain is GTP cyclohydrolase 1 type 2 homolog from Halalkalibacterium halodurans (strain ATCC BAA-125 / DSM 18197 / FERM 7344 / JCM 9153 / C-125) (Bacillus halodurans).